A 360-amino-acid polypeptide reads, in one-letter code: Peptide chain release factor 1 (360 aa).

Gln-236 is modified (N5-methylglutamine).

The protein belongs to the prokaryotic/mitochondrial release factor family. In terms of processing, methylated by PrmC. Methylation increases the termination efficiency of RF1.

The protein resides in the cytoplasm. Its function is as follows. Peptide chain release factor 1 directs the termination of translation in response to the peptide chain termination codons UAG and UAA. This Methylococcus capsulatus (strain ATCC 33009 / NCIMB 11132 / Bath) protein is Peptide chain release factor 1.